Here is a 735-residue protein sequence, read N- to C-terminus: Funoran endo-beta-hydrolase (735 aa).

The N-terminal stretch at 1–27 (MRVKSVYKKLSVSFILVMLSASQEVNS) is a signal peptide. E200 serves as the catalytic Proton donor. Residue E322 is the Nucleophile of the active site.

Belongs to the glycosyl hydrolase 86 family.

It catalyses the reaction Endohydrolysis of beta-(1-&gt;4)-linkages between beta-D-galactopyranose-6-sulfate and 3,6-anhydro-alpha-L-galactopyranose units in funoran.. It carries out the reaction Hydrolysis of (1-&gt;4)-beta-D-galactosidic linkages in agarose, giving the tetramer as the predominant product.. Its activity is regulated as follows. Agarase activity is enhanced in the presence of NaCl. Agarase activity is significantly inhibited by Zn(2+) and slightly activated by several divalent ions including Mg(2+), Cd(2+) and Ca(2+). Endohydrolase that cleaves the beta-1,4 glycosidic bond between beta-D-galactopyranose-6-sulfate (G6S) and 3,6-anhydro-alpha-L-galactopyranose (LA) unit of funoran, a polysaccharide produced by red algae of the genus Gloiopeltis. It releases the disaccharide LA-G6S as the predominant end product. Also acts as a random endo-acting beta-agarase, which can hydrolyze agarose tetrasaccharides and hexasaccharides, and produces disaccharides as smallest products. Besides typical agarose oligosaccharides, it can use methylated galactoses. The enzyme exhibits higher catalytic efficiency towards agarose, but binds funoran preferentially. Has no activity on porphyran. This Wenyingzhuangia aestuarii protein is Funoran endo-beta-hydrolase.